A 341-amino-acid polypeptide reads, in one-letter code: MFVDKTLLITGGTGSFGNAVLSRFLKNDIIKDIKEIRIFSRDEKKQEDMRIALNNPKIKFYIGDVRNYNSIDDAMKDVDYVFHAAALKQVPTCEFYPMEAINTNILGAENVLRAATINKVAKVIVLSTDKAVYPINAMGLSKALMEKLAIAKARMNVRDKTVFCVTRYGNVMASRGSVIPLFINQIKQNKDLTITEPSMTRFLMSLVDSVDLVLYAFEYGHQGDIFVQKSPASTIEVLAKALQGIFNSKNKIRFIGTRHGEKHYESLVSSEEMAKAEDLGNYYRIPMDGRDLNYAKYFVEGEKKIALLEDYTSHNTKRLNLEEVKELLLNLDYVQEELKNA.

Belongs to the polysaccharide synthase family.

It carries out the reaction UDP-alpha-D-glucose = UDP-alpha-D-galactose. Its function is as follows. Epimerizes UDP-galactose to UDP-glucose. In Rickettsia bellii (strain OSU 85-389), this protein is UDP-glucose 4-epimerase (capD).